The following is a 54-amino-acid chain: Rubredoxin (54 aa).

Residues 1 to 54 enclose the Rubredoxin-like domain; sequence MKKYQCIVCGWIYDEAEGWPQDGIAPGTKWEDIPDDWTCPDCGVSKVDFEMIEV. Residues cysteine 6, cysteine 9, cysteine 39, and cysteine 42 each coordinate Fe cation.

It belongs to the rubredoxin family. The cofactor is Fe(3+).

Its subcellular location is the cytoplasm. It participates in hydrocarbon metabolism; alkane degradation. In terms of biological role, involved in the hydrocarbon hydroxylating system, which transfers electrons from NADH to rubredoxin reductase and then through rubredoxin to alkane 1 monooxygenase. In Acinetobacter baylyi (strain ATCC 33305 / BD413 / ADP1), this protein is Rubredoxin (rubA).